Consider the following 238-residue polypeptide: Accessory gene regulator A (238 aa).

Residues 2 to 125 enclose the Response regulatory domain; it reads KIFICEDDPK…LRTRIIDCLE (124 aa). Aspartate 59 is modified (4-aspartylphosphate). An HTH LytTR-type domain is found at 143 to 238; it reads IELKRGSNSV…YASVRNVKKK (96 aa).

The protein resides in the cytoplasm. Functionally, required for high-level post-exponential phase expression of a series of secreted proteins. The protein is Accessory gene regulator A (agrA) of Staphylococcus aureus (strain Mu50 / ATCC 700699).